We begin with the raw amino-acid sequence, 355 residues long: Phosphatidylinositol:ceramide inositolphosphotransferase (355 aa).

At 1–44 the chain is on the cytoplasmic side; sequence MISYPFFSLSPPGLVPPPMAVPPVEMYSGSFWNRMRKPLPLRTQ. Residues 45–65 form a helical membrane-spanning segment; it reads VIRFTVVFVIVSFILAVALQI. Residues 66 to 89 lie on the Extracellular side of the membrane; that stretch reads THERMPDPKVTKPLPDLGFELLTK. Residues 90 to 110 form a helical membrane-spanning segment; it reads ISFLSVVTDVLIAFLSSLSFF. Residues 111 to 165 are Cytoplasmic-facing; the sequence is TLWKLYLLHRHCVGSGEPELPCNIPGVSRFFLSVWLCKENCRIELRNVHTIAWIR. The helical transmembrane segment at 166–186 threads the bilayer; it reads FITSYALLLLFRSLVIVMTSM. At 187 to 205 the chain is on the extracellular side; it reads PTPVDKCQNPPKIENPVKN. A helical transmembrane segment spans residues 206–226; sequence VILTVLTAGGGSIHCGDLMYS. The Cytoplasmic portion of the chain corresponds to 227–251; the sequence is GHTVILTLHLMFHWIYGAMVHWSFR. Catalysis depends on residues histidine 228, histidine 271, and aspartate 275. Residues 252 to 272 form a helical membrane-spanning segment; the sequence is PVVTVVAIFGYYCIVASRSHY. Residues 273–275 lie on the Extracellular side of the membrane; the sequence is TDD. A helical transmembrane segment spans residues 276–296; that stretch reads VLVAIYLTIATFIAVGHNADG. The Cytoplasmic segment spans residues 297-355; sequence APWQLQLFIRWLPCCGANSREVTEDSQPVMVAFKSEAVDELRERDDSAGLSCEVSTNEV.

Belongs to the sphingomyelin synthase family.

The protein resides in the membrane. Bidirectional lipid inositolphosphotransferase capable of converting phosphatidylinositol (PI) and ceramide to inositol-phosphorylceramide (IPC) and diacylglycerol (DAG) and vice versa. Direction is dependent on the relative concentrations of DAG and ceramide as phosphoinositol acceptors. Does not function strictly as a SM synthase. Essential for viability of the pathogenic bloodstream stage of this human protozoan parasite and, consequently, can be considered as potential drug target. The protein is Phosphatidylinositol:ceramide inositolphosphotransferase of Trypanosoma brucei brucei (strain 927/4 GUTat10.1).